The sequence spans 245 residues: Small ribosomal subunit protein uS3 (245 aa).

Residues 39 to 111 (IRNFINKNYS…EVFFNVIEIK (73 aa)) enclose the KH type-2 domain.

This sequence belongs to the universal ribosomal protein uS3 family. As to quaternary structure, part of the 30S ribosomal subunit. Forms a tight complex with proteins S10 and S14.

In terms of biological role, binds the lower part of the 30S subunit head. Binds mRNA in the 70S ribosome, positioning it for translation. This chain is Small ribosomal subunit protein uS3, found in Phytoplasma mali (strain AT).